Consider the following 309-residue polypeptide: MSPPGLVVVDKPAGMTSHDVVGRCRRIFATRRVGHAGTLDPMATGVLVLGVERATKILGLLTAAAKSYSATIRLGQATSTDDAEGDVVRSVDARHLTSQAIEAAVGGLRGDIHQVPSTVSAIKVAGKRAYKLVREGQAVELPARPVRIDRFEVRDLRAAGECVDVDVEVDCSSGTYVRALARDLGAALGVGGHLTALRRTRVGRFGLEQAYGLDELAECPRLSYSLDEACLLIFGRRDLSADEAEAAGNGRALAAAAAGNGRALAAAGIDGVYAACAPDGRVIALLRDEGARTRSVVVIRPATMQDGTS.

The active-site Nucleophile is Asp-40.

Belongs to the pseudouridine synthase TruB family. Type 1 subfamily.

It catalyses the reaction uridine(55) in tRNA = pseudouridine(55) in tRNA. Responsible for synthesis of pseudouridine from uracil-55 in the psi GC loop of transfer RNAs. In Mycobacterium avium (strain 104), this protein is tRNA pseudouridine synthase B.